The following is a 316-amino-acid chain: Glutamyl endopeptidase (316 aa).

An N-terminal signal peptide occupies residues 1-30 (MVSKKSVKRGLITGLIGISIYSLGMHPAQA). Residues 31-94 (APSPHTPVSS…SPAKAPYSIK (64 aa)) constitute a propeptide that is removed on maturation. Cys-126 and Cys-142 form a disulfide bridge. Catalysis depends on charge relay system residues His-141 and Ser-261. Cys-275 and Cys-279 are disulfide-bonded.

It belongs to the peptidase S1B family.

It is found in the secreted. It carries out the reaction Preferential cleavage: Glu-|-Xaa, Asp-|-Xaa.. Its function is as follows. Specific for hydrolysis of peptide bonds on the carboxyl side of acidic amino acid residues, with a strong preference for Glu. This chain is Glutamyl endopeptidase (blaSE), found in Bacillus licheniformis (strain ATCC 14580 / DSM 13 / JCM 2505 / CCUG 7422 / NBRC 12200 / NCIMB 9375 / NCTC 10341 / NRRL NRS-1264 / Gibson 46).